The sequence spans 337 residues: S-adenosylmethionine:tRNA ribosyltransferase-isomerase (337 aa).

This sequence belongs to the QueA family. As to quaternary structure, monomer.

It localises to the cytoplasm. The enzyme catalyses 7-aminomethyl-7-carbaguanosine(34) in tRNA + S-adenosyl-L-methionine = epoxyqueuosine(34) in tRNA + adenine + L-methionine + 2 H(+). The protein operates within tRNA modification; tRNA-queuosine biosynthesis. Functionally, transfers and isomerizes the ribose moiety from AdoMet to the 7-aminomethyl group of 7-deazaguanine (preQ1-tRNA) to give epoxyqueuosine (oQ-tRNA). This chain is S-adenosylmethionine:tRNA ribosyltransferase-isomerase, found in Legionella pneumophila (strain Paris).